Reading from the N-terminus, the 260-residue chain is Snake venom serine protease salmobin (260 aa).

Residues 1 to 18 (MVLIKVLANHLILQLSYA) form the signal peptide. A propeptide spanning residues 19–24 (QKSSEL) is cleaved from the precursor. Residues 25–251 (VIGGDECNIN…YTDWIQSIIA (227 aa)) enclose the Peptidase S1 domain. Intrachain disulfides connect Cys31/Cys165, Cys52/Cys68, Cys102/Cys258, Cys144/Cys212, Cys176/Cys191, and Cys202/Cys227. His67 (charge relay system) is an active-site residue. Asn105 is a glycosylation site (N-linked (GlcNAc...) asparagine). Asp112 acts as the Charge relay system in catalysis. N-linked (GlcNAc...) asparagine glycosylation is found at Asn123 and Asn156. Ser206 (charge relay system) is an active-site residue.

It belongs to the peptidase S1 family. Snake venom subfamily. Monomer. As to expression, expressed by the venom gland.

The protein resides in the secreted. Its function is as follows. Snake venom serine protease that may act in the hemostasis system of the prey. The protein is Snake venom serine protease salmobin of Gloydius halys (Chinese water mocassin).